Reading from the N-terminus, the 592-residue chain is Bifunctional purine biosynthesis protein ADE17 (592 aa).

The region spanning 1–147 (MANYTKTAIL…KNHARVTILS (147 aa)) is the MGS-like domain. Residues 35 to 38 (SGGT), 65 to 68 (RVKT), 102 to 103 (CN), and 126 to 127 (DI) each bind IMP. Lysine 138 (proton donor/acceptor; for FAICAR cyclization activity) is an active-site residue. Residues 206 to 207 (RY), histidine 267, glycine 315, aspartate 338, asparagine 430, and arginine 450 contribute to the 5-amino-1-(5-phospho-beta-D-ribosyl)imidazole-4-carboxamide site. The Proton acceptor; for AICAR formyltransferase activity role is filled by histidine 267. Isoleucine 451 serves as a coordination point for (6R)-10-formyltetrahydrofolate. Phenylalanine 541 is a 5-amino-1-(5-phospho-beta-D-ribosyl)imidazole-4-carboxamide binding site. Residues aspartate 546 and 565–566 (SV) contribute to the (6R)-10-formyltetrahydrofolate site. Arginine 588 is a 5-amino-1-(5-phospho-beta-D-ribosyl)imidazole-4-carboxamide binding site.

The protein belongs to the PurH family. Homodimer.

Its subcellular location is the cytoplasm. It localises to the cytosol. The enzyme catalyses (6R)-10-formyltetrahydrofolate + 5-amino-1-(5-phospho-beta-D-ribosyl)imidazole-4-carboxamide = 5-formamido-1-(5-phospho-D-ribosyl)imidazole-4-carboxamide + (6S)-5,6,7,8-tetrahydrofolate. It carries out the reaction IMP + H2O = 5-formamido-1-(5-phospho-D-ribosyl)imidazole-4-carboxamide. It functions in the pathway purine metabolism; IMP biosynthesis via de novo pathway; 5-formamido-1-(5-phospho-D-ribosyl)imidazole-4-carboxamide from 5-amino-1-(5-phospho-D-ribosyl)imidazole-4-carboxamide (10-formyl THF route): step 1/1. The protein operates within purine metabolism; IMP biosynthesis via de novo pathway; IMP from 5-formamido-1-(5-phospho-D-ribosyl)imidazole-4-carboxamide: step 1/1. Functionally, bifunctional enzyme that catalyzes the last two steps of purine biosynthesis. Acts as a transformylase that incorporates a formyl group to the AMP analog AICAR (5-amino-1-(5-phospho-beta-D-ribosyl)imidazole-4-carboxamide) to produce the intermediate formyl-AICAR (FAICAR). Also catalyzes the cyclization of FAICAR to IMP. The sequence is that of Bifunctional purine biosynthesis protein ADE17 from Saccharomyces cerevisiae (strain ATCC 204508 / S288c) (Baker's yeast).